The following is an 85-amino-acid chain: MVKLRLKRCGRKQQAIYRIVAIDVRSRREGRDLRKVGFYDPIKNQTCLNVPAILYFLEKGAQPTRTVYDILRKAEFFKDKERTLS.

Belongs to the bacterial ribosomal protein bS16 family.

Its subcellular location is the plastid. It is found in the chloroplast. The chain is Small ribosomal subunit protein bS16c from Saccharum hybrid (Sugarcane).